The chain runs to 358 residues: Photosystem II protein D1 2 (358 aa).

3 consecutive transmembrane segments (helical) span residues 28–45, 117–132, and 141–155; these read YVGW…AATT, HFLI…QWEL, and WICV…AAFA. Position 117 (His117) interacts with chlorophyll a. Tyr125 contributes to the pheophytin a binding site. Residues Asp169 and Glu188 each contribute to the [CaMn4O5] cluster site. The chain crosses the membrane as a helical span at residues 196 to 217; sequence FHMLGVAGVFGGSLFSAMHGSL. Residue His197 participates in chlorophyll a binding. Residues His214 and 263 to 264 contribute to the a quinone site; that span reads SF. His214 provides a ligand contact to Fe cation. His271 contacts Fe cation. A helical transmembrane segment spans residues 273 to 287; it reads FLAAWPVVGIWFTSM. Positions 331, 332, 341, and 343 each coordinate [CaMn4O5] cluster. Positions 344–358 are excised as a propeptide; that stretch reads ATESTPVALQAPTIG.

The protein belongs to the reaction center PufL/M/PsbA/D family. As to quaternary structure, PSII is composed of 1 copy each of membrane proteins PsbA, PsbB, PsbC, PsbD, PsbE, PsbF, PsbH, PsbI, PsbJ, PsbK, PsbL, PsbM, PsbT, PsbX, PsbY, PsbZ, Psb30/Ycf12, peripheral proteins PsbO, CyanoQ (PsbQ), PsbU, PsbV and a large number of cofactors. It forms dimeric complexes. The cofactor is The D1/D2 heterodimer binds P680, chlorophylls that are the primary electron donor of PSII, and subsequent electron acceptors. It shares a non-heme iron and each subunit binds pheophytin, quinone, additional chlorophylls, carotenoids and lipids. D1 provides most of the ligands for the Mn4-Ca-O5 cluster of the oxygen-evolving complex (OEC). There is also a Cl(-1) ion associated with D1 and D2, which is required for oxygen evolution. The PSII complex binds additional chlorophylls, carotenoids and specific lipids.. In terms of processing, tyr-160 forms a radical intermediate that is referred to as redox-active TyrZ, YZ or Y-Z. Post-translationally, C-terminally processed by CtpA; processing is essential to allow assembly of the oxygen-evolving complex and thus photosynthetic growth.

It localises to the cellular thylakoid membrane. The enzyme catalyses 2 a plastoquinone + 4 hnu + 2 H2O = 2 a plastoquinol + O2. In terms of biological role, photosystem II (PSII) is a light-driven water:plastoquinone oxidoreductase that uses light energy to abstract electrons from H(2)O, generating O(2) and a proton gradient subsequently used for ATP formation. It consists of a core antenna complex that captures photons, and an electron transfer chain that converts photonic excitation into a charge separation. The D1/D2 (PsbA/PsbD) reaction center heterodimer binds P680, the primary electron donor of PSII as well as several subsequent electron acceptors. The sequence is that of Photosystem II protein D1 2 from Synechococcus sp. (strain WH7803).